Here is a 362-residue protein sequence, read N- to C-terminus: Chorismate synthase (362 aa).

R47 contributes to the NADP(+) binding site. FMN-binding positions include 124 to 126, G286, 301 to 305, and R327; these read RSS and KPTAT.

It belongs to the chorismate synthase family. Homotetramer. FMNH2 serves as cofactor.

It catalyses the reaction 5-O-(1-carboxyvinyl)-3-phosphoshikimate = chorismate + phosphate. Its pathway is metabolic intermediate biosynthesis; chorismate biosynthesis; chorismate from D-erythrose 4-phosphate and phosphoenolpyruvate: step 7/7. Functionally, catalyzes the anti-1,4-elimination of the C-3 phosphate and the C-6 proR hydrogen from 5-enolpyruvylshikimate-3-phosphate (EPSP) to yield chorismate, which is the branch point compound that serves as the starting substrate for the three terminal pathways of aromatic amino acid biosynthesis. This reaction introduces a second double bond into the aromatic ring system. The polypeptide is Chorismate synthase (Synechocystis sp. (strain ATCC 27184 / PCC 6803 / Kazusa)).